The sequence spans 542 residues: CTP synthase (542 aa).

The interval 1 to 265 (MARYVFITGG…DDEVLAAFGI (265 aa)) is amidoligase domain. Position 13 (serine 13) interacts with CTP. A UTP-binding site is contributed by serine 13. ATP-binding positions include 14–19 (SLGKGI) and aspartate 71. The Mg(2+) site is built by aspartate 71 and glutamate 139. CTP contacts are provided by residues 146 to 148 (DIE), 186 to 191 (KTKPTQ), and lysine 222. UTP contacts are provided by residues 186–191 (KTKPTQ) and lysine 222. One can recognise a Glutamine amidotransferase type-1 domain in the interval 291-541 (TIAIVGKYTG…IEAATEQSRL (251 aa)). Glycine 353 provides a ligand contact to L-glutamine. The active-site Nucleophile; for glutamine hydrolysis is cysteine 380. L-glutamine-binding positions include 381–384 (FGMQ), glutamate 404, and arginine 469. Residues histidine 514 and glutamate 516 contribute to the active site.

It belongs to the CTP synthase family. Homotetramer.

It carries out the reaction UTP + L-glutamine + ATP + H2O = CTP + L-glutamate + ADP + phosphate + 2 H(+). The enzyme catalyses L-glutamine + H2O = L-glutamate + NH4(+). The catalysed reaction is UTP + NH4(+) + ATP = CTP + ADP + phosphate + 2 H(+). The protein operates within pyrimidine metabolism; CTP biosynthesis via de novo pathway; CTP from UDP: step 2/2. Its activity is regulated as follows. Allosterically activated by GTP, when glutamine is the substrate; GTP has no effect on the reaction when ammonia is the substrate. The allosteric effector GTP functions by stabilizing the protein conformation that binds the tetrahedral intermediate(s) formed during glutamine hydrolysis. Inhibited by the product CTP, via allosteric rather than competitive inhibition. Catalyzes the ATP-dependent amination of UTP to CTP with either L-glutamine or ammonia as the source of nitrogen. Regulates intracellular CTP levels through interactions with the four ribonucleotide triphosphates. This chain is CTP synthase, found in Rhizobium johnstonii (strain DSM 114642 / LMG 32736 / 3841) (Rhizobium leguminosarum bv. viciae).